The chain runs to 323 residues: MSTVGSSSEGRHSVRCFRHRNANTFLTYSKCPLEPEFIGEHLFRLTREYEPAYILVVRETHTDGTWHCHALLQCIKPCTTRDERYFDIDRYHGNIQSAKSTDKVREYILKDPKDKWEKGTYIPRKKSFVPPGKEPAEKKPTKDEVMREIMTHATSREEYLSLVQSSLPYDWATKLNYFEYSASRLFPDIAEPYTNPHPTTEYDLHCNETIEDWLKPNIYQVSPQAYKLLEPSCLSLEQAIADLEWLDDTTRMLQEKEREASTSAAQHGQVKHPGLEASDDTTTGKTISTGLHMMKKLSTMSLTTFPSSSVRAGNDSSAAKKTT.

The CRESS-DNA virus Rep endonuclease domain occupies 18–121 (RHRNANTFLT…PKDKWEKGTY (104 aa)). An RCR-1 motif is present at residues 25 to 28 (FLTY). A divalent metal cation-binding residues include E59, H67, and H69. The RCR-2 signature appears at 67–69 (HCH). Y107 functions as the For DNA cleavage activity in the catalytic mechanism. Positions 107–110 (YILK) match the RCR-3 motif. D111 is a binding site for a divalent metal cation. Residues 181 to 193 (SASRLFPDIAEPY) form an oligomerization region. The short motif at 204-208 (LHCNE) is the LXCXE motif, interaction with host RBR1 element. The tract at residues 256 to 286 (KEREASTSAAQHGQVKHPGLEASDDTTTGKT) is disordered.

Belongs to the geminiviridae Rep protein family. In terms of assembly, homooligomer. Interacts (via LXCXE domain) with host retinoblastoma-related protein 1 (RBR1), and may thereby deregulate the host cell cycle. Part of the C- and V-complexes which are RepA-Rep-DNA complexes involved in the c-sense and v-sense transcription. The cofactor is Mg(2+). Mn(2+) is required as a cofactor.

Its subcellular location is the host nucleus. The protein resides in the host cytoplasm. Implicated in enhancement of V-sense gene expression. Acts a an inhibitor of C-sense gene transcription. This chain is Replication-associated protein A, found in Megathyrsus maximus (PanSV).